The following is a 511-amino-acid chain: Glucose-6-phosphate 1-dehydrogenase (511 aa).

Residues 29–36, R63, and K164 contribute to the NADP(+) site; that span reads GASGDLAK. D-glucose 6-phosphate is bound by residues K164, 194-198, E232, and D251; that span reads HYLGK. H256 functions as the Proton acceptor in the catalytic mechanism. K347 is a binding site for NADP(+). D-glucose 6-phosphate is bound at residue K350. K356, R360, and R382 together coordinate NADP(+). A D-glucose 6-phosphate-binding site is contributed by Q384. NADP(+)-binding positions include 390-392, 410-412, and R477; these read YIK and DLT.

It belongs to the glucose-6-phosphate dehydrogenase family.

It catalyses the reaction D-glucose 6-phosphate + NADP(+) = 6-phospho-D-glucono-1,5-lactone + NADPH + H(+). The protein operates within carbohydrate degradation; pentose phosphate pathway; D-ribulose 5-phosphate from D-glucose 6-phosphate (oxidative stage): step 1/3. Catalyzes the rate-limiting step of the oxidative pentose-phosphate pathway, which represents a route for the dissimilation of carbohydrates besides glycolysis. The main function of this enzyme is to provide reducing power (NADPH) and pentose phosphates for fatty acid and nucleic acid synthesis. The protein is Glucose-6-phosphate 1-dehydrogenase (gsdA) of Emericella nidulans (strain FGSC A4 / ATCC 38163 / CBS 112.46 / NRRL 194 / M139) (Aspergillus nidulans).